An 85-amino-acid polypeptide reads, in one-letter code: Protein Vpu (85 aa).

The Extracellular segment spans residues 1–7; the sequence is MHHRDLL. Residues 8 to 28 form a helical membrane-spanning segment; that stretch reads AIIIISALLFINVILWGFILR. Over 29 to 85 the chain is Cytoplasmic; sequence KYLEQKEQDRKEREILERLRRIREIRDDSDYESNGEEEQEVMDLVLSHGFDNPMFEP.

This sequence belongs to the HIV-1 VPU protein family. As to quaternary structure, homopentamer. Interacts with host CD4 and BRTC; these interactions induce proteasomal degradation of CD4. Interacts with host BST2; this interaction leads to the degradation of host BST2. Interacts with host FBXW11. Interacts with host AP1M1; this interaction plays a role in the mistrafficking and subsequent degradation of host BST2. Interacts with host RANBP2; this interaction allows Vpu to down-regulate host BLM sumoylation. Post-translationally, phosphorylated by host CK2. This phosphorylation is necessary for interaction with human BTRC and degradation of CD4.

It localises to the host membrane. Ion channel activity is inhibited by hexamethylene amiloride in vitro. Functionally, enhances virion budding by targeting host CD4 and Tetherin/BST2 to proteasome degradation. Degradation of CD4 prevents any unwanted premature interactions between viral Env and its host receptor CD4 in the endoplasmic reticulum. Degradation of antiretroviral protein Tetherin/BST2 is important for virion budding, as BST2 tethers new viral particles to the host cell membrane. Mechanistically, Vpu bridges either CD4 or BST2 to BTRC, a substrate recognition subunit of the Skp1/Cullin/F-box protein E3 ubiquitin ligase, induces their ubiquitination and subsequent proteasomal degradation. The alteration of the E3 ligase specificity by Vpu seems to promote the degradation of host IKBKB, leading to NF-kappa-B down-regulation and subsequent apoptosis. Acts as a viroporin that forms an oligomeric ion channel in membranes. Modulates the host DNA repair mechanisms to promote degradation of nuclear viral cDNA in cells that are already productively infected in order to suppress immune sensing and proviral hyper-integration (superinfection). Manipulates PML-NBs and modulates SUMOylation of host BLM protein thereby enhancing its DNA-end processing activity toward viral unintegrated linear DNA. Also inhibits RAD52-mediated homologous repair of viral cDNA, preventing the generation of dead-end circular forms of single copies of the long terminal repeat and permitting sustained nucleolytic attack. In Human immunodeficiency virus type 1 group O (isolate ANT70) (HIV-1), this protein is Protein Vpu.